We begin with the raw amino-acid sequence, 320 residues long: SUMO-activating enzyme subunit 1B-1 (320 aa).

Met1 carries the post-translational modification N-acetylmethionine.

This sequence belongs to the ubiquitin-activating E1 family. As to quaternary structure, heterodimer of SAE1A or SAE1B and SAE2. The complex binds SUMO proteins via SAE2.

The protein localises to the nucleus. It functions in the pathway protein modification; protein sumoylation. The dimeric enzyme acts as an E1 ligase for SUMO1 and SUMO2. It mediates ATP-dependent activation of SUMO proteins and formation of a thioester with a conserved cysteine residue on SAE2. Functionally redundant with its paralog SAE1A. The polypeptide is SUMO-activating enzyme subunit 1B-1 (SAE1B-1) (Arabidopsis thaliana (Mouse-ear cress)).